A 639-amino-acid polypeptide reads, in one-letter code: Protein argonaute (639 aa).

Positions 1 to 100 (MYLNLYKIDI…YIKKLFLDND (100 aa)) are N-terminal domain. The linker L1 stretch occupies residues 101 to 153 (FYFKKGNNFISNSEVFSLDSNENVNAHLTYKIKIHNISNEYYLSILPKFTFLS). Residues 154–209 (KEPALESAIKSGYLYNIKSGKSFPYISGLDGILKIDIGNNQIVEVAYPENYLFNFT) are PAZ domain. The interval 210-292 (TRDAEKYGFS…KYSFYKNEQP (83 aa)) is linker L2. Residues 293-424 (LKAIFFFSSK…YVYKMGNFIP (132 aa)) are mid domain. Residues 425-639 (ECKPFILKKM…DYEWKLYIPY (215 aa)) are PIWI domain. Catalysis depends on residues Asp-446, Glu-482, Asp-516, and Asn-624. Asp-446 contributes to the Mn(2+) binding site. Residues Asp-516 and Asn-624 each contribute to the Mn(2+) site.

This sequence belongs to the argonaute family. Long pAgo subfamily. Mn(2+) is required as a cofactor.

It localises to the cytoplasm. An RNA-guided ssDNA endonuclease that may play a role in defense against invading mobile genetic elements. Uses short 5'-OH-ssRNA sequences as guides (gRNA) to bind complementary target DNA (tDNA) or target RNA resulting in target cleavage. The cleavage site is 10 nucleotides (nt) downstream of the target residue base-paired with the 5'-end of the gRNA. Reaction rates are fastest on 5'-OH-gRNA:tDNA followed by 5'-OH-gRNA:target RNA. gRNA between 17-21 nt supports equivalent rates of cleavage, has no preferred 5'-nt. Has weak activity on tDNA with 5'-phospho-gRNA, yielding products 1-2 nt longer. Unlike other characterized prokaryotic Ago proteins symmetric mismatches centered around the cleavage site reduce cleavage efficiency. This chain is Protein argonaute, found in Marinitoga piezophila (strain DSM 14283 / JCM 11233 / KA3).